The following is a 419-amino-acid chain: Histidine--tRNA ligase (419 aa).

Belongs to the class-II aminoacyl-tRNA synthetase family. In terms of assembly, homodimer.

It is found in the cytoplasm. The enzyme catalyses tRNA(His) + L-histidine + ATP = L-histidyl-tRNA(His) + AMP + diphosphate + H(+). In Thiobacillus denitrificans (strain ATCC 25259 / T1), this protein is Histidine--tRNA ligase.